The chain runs to 911 residues: Leucine--tRNA ligase (911 aa).

A 'HIGH' region motif is present at residues 42–52; it reads PYPSGKLHMGH. The 'KMSKS' region motif lies at 659 to 663; sequence TMSKS. Lys-662 contributes to the ATP binding site.

It belongs to the class-I aminoacyl-tRNA synthetase family.

It localises to the cytoplasm. The catalysed reaction is tRNA(Leu) + L-leucine + ATP = L-leucyl-tRNA(Leu) + AMP + diphosphate. This chain is Leucine--tRNA ligase, found in Delftia acidovorans (strain DSM 14801 / SPH-1).